A 431-amino-acid polypeptide reads, in one-letter code: Keratin, type I cytoskeletal 40 (431 aa).

The interval 1-89 (MTSDCSSTHC…CEDGVFTSNE (89 aa)) is head. One can recognise an IF rod domain in the interval 89-400 (EKETMQFLND…GLLDSEDSRL (312 aa)). The coil 1A stretch occupies residues 90–124 (KETMQFLNDRLASYLEKVRSLEETNAELESRIQEQ). A linker 1 region spans residues 125–135 (CEQDIPMVCPD). The tract at residues 136 to 236 (YQRYFNTIED…HEEEVNLLRE (101 aa)) is coil 1B. Residues 237–252 (QLGDRLSVELDTAPTL) form a linker 12 region. The tract at residues 253–396 (DLNRVLDEMR…NTYWGLLDSE (144 aa)) is coil 2. The segment at 397-431 (DSRLSCSPCSTTCTSSNTCEPCSAYVICTVENCCL) is tail.

The protein belongs to the intermediate filament family. In terms of assembly, heterotetramer of two type I and two type II keratins. Expressed in skin and scalp. Also very weakly expressed in tongue, breast, colon and small intestine. In the hair follicle, it is specifically present in the upper hair cuticle. Not present in the upper cortex (at protein level).

May play a role in late hair differentiation. In Homo sapiens (Human), this protein is Keratin, type I cytoskeletal 40 (KRT40).